Consider the following 79-residue polypeptide: Biotin synthase auxiliary protein (79 aa).

This sequence belongs to the BsaP family. The cofactor is iron-sulfur cluster.

Its function is as follows. Required for the activity of the biotin synthase BioB. This is Biotin synthase auxiliary protein from Mycobacterium bovis (strain ATCC BAA-935 / AF2122/97).